Consider the following 290-residue polypeptide: Pyridoxal kinase PdxY (290 aa).

Residues Ser-12 and 47–48 (TQ) each bind substrate. ATP contacts are provided by residues Asp-114, Glu-151, Lys-184, and 211–214 (RPLL). Asp-225 serves as a coordination point for substrate.

This sequence belongs to the pyridoxine kinase family. PdxY subfamily. In terms of assembly, homodimer. Requires Mg(2+) as cofactor.

The catalysed reaction is pyridoxal + ATP = pyridoxal 5'-phosphate + ADP + H(+). It participates in cofactor metabolism; pyridoxal 5'-phosphate salvage; pyridoxal 5'-phosphate from pyridoxal: step 1/1. Pyridoxal kinase involved in the salvage pathway of pyridoxal 5'-phosphate (PLP). Catalyzes the phosphorylation of pyridoxal to PLP. The chain is Pyridoxal kinase PdxY from Pseudomonas fluorescens (strain ATCC BAA-477 / NRRL B-23932 / Pf-5).